Reading from the N-terminus, the 341-residue chain is tRNA N6-adenosine threonylcarbamoyltransferase (341 aa).

Histidine 111 and histidine 115 together coordinate Fe cation. Substrate-binding positions include 134 to 138 (LVSGG), aspartate 167, glycine 180, and asparagine 276. Residue aspartate 304 coordinates Fe cation.

Belongs to the KAE1 / TsaD family. The cofactor is Fe(2+).

It localises to the cytoplasm. The catalysed reaction is L-threonylcarbamoyladenylate + adenosine(37) in tRNA = N(6)-L-threonylcarbamoyladenosine(37) in tRNA + AMP + H(+). In terms of biological role, required for the formation of a threonylcarbamoyl group on adenosine at position 37 (t(6)A37) in tRNAs that read codons beginning with adenine. Is involved in the transfer of the threonylcarbamoyl moiety of threonylcarbamoyl-AMP (TC-AMP) to the N6 group of A37, together with TsaE and TsaB. TsaD likely plays a direct catalytic role in this reaction. In Pseudomonas fluorescens (strain ATCC BAA-477 / NRRL B-23932 / Pf-5), this protein is tRNA N6-adenosine threonylcarbamoyltransferase.